A 324-amino-acid chain; its full sequence is Envelope protein H3 (324 aa).

At 1-284 (MAAVKTPVIV…FTTPLISFFG (284 aa)) the chain is on the virion surface side. Residues 285 to 305 (LFDINVIGLIVILFIMFMLIF) traverse the membrane as a helical; Signal-anchor segment. Over 306-324 (NVKSKLLWFLTGTFVTAFI) the chain is Intravirion.

The protein belongs to the orthopoxvirus OPG108 family. Post-translationally, does not contain disulfide bonds.

The protein localises to the virion membrane. Envelope protein that binds to heparan sulfate on the cell surface and might provide virion attachment to target cell. In Homo sapiens (Human), this protein is Envelope protein H3 (OPG108).